The chain runs to 230 residues: Membrane protein (230 aa).

The Virion surface segment spans residues 1–24 (MSSPTTPVPVISWTADEAIKFLKE). A helical membrane pass occupies residues 25–45 (WNFSLGIIVLFITIILQFGYT). The Intravirion segment spans residues 46–55 (SRSMFVYVIK). A helical membrane pass occupies residues 56–76 (MVILWLMWPLTIILTIFNCVY). Residues 77–84 (ALNNVYLG) lie on the Virion surface side of the membrane. The chain crosses the membrane as a helical span at residues 85 to 105 (FSIVFTIVAIIMWVVYFVNSI). At 106 to 228 (RLFIRTGSWW…SGMDTALLRN (123 aa)) the chain is on the intravirion side.

Belongs to the betacoronaviruses M protein family. As to quaternary structure, homomultimer. Interacts with envelope E protein in the budding compartment of the host cell, which is located between endoplasmic reticulum and the Golgi complex. Forms a complex with HE and S proteins. Interacts with nucleocapsid N protein. This interaction probably participates in RNA packaging into the virus.

The protein resides in the virion membrane. It localises to the host Golgi apparatus membrane. Component of the viral envelope that plays a central role in virus morphogenesis and assembly via its interactions with other viral proteins. In Porcine hemagglutinating encephalomyelitis virus (strain 67N) (HEV-67N), this protein is Membrane protein.